A 451-amino-acid polypeptide reads, in one-letter code: Endosomal transmembrane epsin interactor 1 (451 aa).

The N-terminal stretch at 1-29 (MILLVNLFVLLSVVCILLNLAGFILGCQG) is a signal peptide. Over 30–85 (AQFVSSVPRCDLVDLGEGKICFCCEEFQPAKCTDKENALKLFPVQPCSAVHLLLKK) the chain is Lumenal. A helical membrane pass occupies residues 86 to 106 (VLFALCALNALTTTVCLVAAA). Over 107–451 (LRYLQIFASR…LIGVIRETVL (345 aa)) the chain is Cytoplasmic. Positions 107-451 (LRYLQIFASR…LIGVIRETVL (345 aa)) are mediates interaction with EPN1. Short sequence motifs (PPxY; mediates interaction with ITCH) lie at residues 148 to 151 (PPSY) and 194 to 197 (PPPY). The segment covering 204-213 (TDQEQESSFQ) has biased composition (polar residues). The segment at 204 to 224 (TDQEQESSFQMPEGPETAASP) is disordered. A Glycyl lysine isopeptide (Lys-Gly) (interchain with G-Cter in ubiquitin) cross-link involves residue K274. S275 carries the phosphoserine modification. A Glycyl lysine isopeptide (Lys-Gly) (interchain with G-Cter in ubiquitin) cross-link involves residue K365.

Belongs to the ENTREP family. Interacts with ITCH; enhances the ubiquitination of CXCR4 by ITCH and the subsequent endocytosis and desensitization of the receptor. Interacts with EPN1.

The protein resides in the early endosome membrane. The protein localises to the late endosome membrane. It is found in the recycling endosome membrane. It localises to the cell membrane. In terms of biological role, functions as an activator of the E3 ubiquitin protein ligase ITCH in the ubiquitination of the CXCL12-activated CXCR4 receptor. Thereby, triggers CXCR4 endocytosis and desensitization, negatively regulating the CXCL12/CXCR4 signaling pathway. The protein is Endosomal transmembrane epsin interactor 1 of Mus musculus (Mouse).